The following is an 860-amino-acid chain: Beta-glucosidase 1 (860 aa).

The N-terminal stretch at Met1–Ala19 is a signal peptide. N-linked (GlcNAc...) asparagine glycans are attached at residues Asn61, Asn211, and Asn252. Asp280 is a catalytic residue. N-linked (GlcNAc...) asparagine glycans are attached at residues Asn315, Asn322, Asn354, Asn387, Asn442, Asn523, Asn542, Asn564, Asn658, Asn668, Asn690, and Asn712.

This sequence belongs to the glycosyl hydrolase 3 family.

It carries out the reaction Hydrolysis of terminal, non-reducing beta-D-glucosyl residues with release of beta-D-glucose.. It functions in the pathway glycan metabolism; cellulose degradation. The sequence is that of Beta-glucosidase 1 from Aspergillus aculeatus.